The chain runs to 104 residues: Flagellar hook-basal body complex protein FliE (104 aa).

The protein belongs to the FliE family.

The protein localises to the bacterial flagellum basal body. The protein is Flagellar hook-basal body complex protein FliE of Salmonella heidelberg (strain SL476).